Reading from the N-terminus, the 156-residue chain is Putative HTH-type transcriptional regulator YwgB (156 aa).

The HTH rrf2-type domain occupies 2–133 (KMKSGMEQAV…REESLQHVMD (132 aa)).

The chain is Putative HTH-type transcriptional regulator YwgB (ywgB) from Bacillus subtilis (strain 168).